A 289-amino-acid chain; its full sequence is ATP phosphoribosyltransferase (289 aa).

Belongs to the ATP phosphoribosyltransferase family. Long subfamily. Mg(2+) is required as a cofactor.

It localises to the cytoplasm. The enzyme catalyses 1-(5-phospho-beta-D-ribosyl)-ATP + diphosphate = 5-phospho-alpha-D-ribose 1-diphosphate + ATP. The protein operates within amino-acid biosynthesis; L-histidine biosynthesis; L-histidine from 5-phospho-alpha-D-ribose 1-diphosphate: step 1/9. Feedback inhibited by histidine. Its function is as follows. Catalyzes the condensation of ATP and 5-phosphoribose 1-diphosphate to form N'-(5'-phosphoribosyl)-ATP (PR-ATP). Has a crucial role in the pathway because the rate of histidine biosynthesis seems to be controlled primarily by regulation of HisG enzymatic activity. This chain is ATP phosphoribosyltransferase, found in Methanosarcina mazei (strain ATCC BAA-159 / DSM 3647 / Goe1 / Go1 / JCM 11833 / OCM 88) (Methanosarcina frisia).